Reading from the N-terminus, the 441-residue chain is E3 ubiquitin-protein ligase APD1 (441 aa).

The next 2 membrane-spanning stretches (helical) occupy residues 60–80 and 305–325; these read SNLY…FILI and IAYV…IQFC. An RING-type zinc finger spans residues 390-429; it reads CAICFDVPRDCFFLPCGHSVSCYECGTTMQEADGSCPICR.

As to expression, expressed in the shoot apical meristems (SAM), root tips and inflorescences, and, at low levels, in floral buds and pollen.

It is found in the endomembrane system. It localises to the vacuole membrane. The catalysed reaction is S-ubiquitinyl-[E2 ubiquitin-conjugating enzyme]-L-cysteine + [acceptor protein]-L-lysine = [E2 ubiquitin-conjugating enzyme]-L-cysteine + N(6)-ubiquitinyl-[acceptor protein]-L-lysine.. It participates in protein modification; protein ubiquitination. Its function is as follows. Involved in pollen mitosis II (PMII) regulation during male gametogenesis. The sequence is that of E3 ubiquitin-protein ligase APD1 from Arabidopsis thaliana (Mouse-ear cress).